Reading from the N-terminus, the 354-residue chain is Selenide, water dikinase (354 aa).

Residue Sec-21 is part of the active site. Residue Sec-21 is a non-standard amino acid, selenocysteine. Residues Lys-24 and 51 to 53 contribute to the ATP site; that span reads TSD. Mg(2+) is bound at residue Asp-54. ATP is bound by residues Asp-71, Asp-94, and 141-143; that span reads GHT. Asp-94 is a binding site for Mg(2+). Asp-229 contacts Mg(2+).

It belongs to the selenophosphate synthase 1 family. Class I subfamily. As to quaternary structure, homodimer. It depends on Mg(2+) as a cofactor.

It catalyses the reaction hydrogenselenide + ATP + H2O = selenophosphate + AMP + phosphate + 2 H(+). In terms of biological role, synthesizes selenophosphate from selenide and ATP. The polypeptide is Selenide, water dikinase (Treponema denticola (strain ATCC 35405 / DSM 14222 / CIP 103919 / JCM 8153 / KCTC 15104)).